The following is a 199-amino-acid chain: ATP synthase subunit a (199 aa).

The next 5 membrane-spanning stretches (helical) occupy residues 2 to 22, 53 to 73, 80 to 100, 141 to 161, and 169 to 189; these read NQVY…LFYF, VISV…YFTY, MVEF…LTFI, LTVN…GLEL, and WLSI…SYIF.

It belongs to the ATPase A chain family. F-type ATPases have 2 components, CF(1) - the catalytic core - and CF(0) - the membrane proton channel. CF(1) has five subunits: alpha(3), beta(3), gamma(1), delta(1), epsilon(1). CF(0) has three main subunits: a, b and c.

It is found in the mitochondrion inner membrane. Functionally, mitochondrial membrane ATP synthase (F(1)F(0) ATP synthase or Complex V) produces ATP from ADP in the presence of a proton gradient across the membrane which is generated by electron transport complexes of the respiratory chain. F-type ATPases consist of two structural domains, F(1) - containing the extramembraneous catalytic core and F(0) - containing the membrane proton channel, linked together by a central stalk and a peripheral stalk. During catalysis, ATP synthesis in the catalytic domain of F(1) is coupled via a rotary mechanism of the central stalk subunits to proton translocation. Key component of the proton channel; it may play a direct role in the translocation of protons across the membrane. This chain is ATP synthase subunit a (atp6), found in Caenorhabditis briggsae.